A 370-amino-acid polypeptide reads, in one-letter code: Glutathione S-transferase omega-like 2 (370 aa).

Arginine 15 contributes to the glutathione binding site. Cysteine 46 (nucleophile) is an active-site residue. Glutathione contacts are provided by tryptophan 79, arginine 155, valine 158, glutamate 173, and serine 174. The 153-residue stretch at 201–353 folds into the GST C-terminal domain; that stretch reads PAQLKTQIDD…LHYTRSHTRI (153 aa).

The protein belongs to the GST superfamily. Omega family. In terms of assembly, homodimer.

The protein localises to the cytoplasm. The enzyme catalyses RX + glutathione = an S-substituted glutathione + a halide anion + H(+). It catalyses the reaction L-dehydroascorbate + 2 glutathione = glutathione disulfide + L-ascorbate. Active as '1-Cys' thiol transferase against beta-hydroxyethyl disulfide (HED), as dehydroascorbate reductase and as dimethylarsinic acid reductase, while not active against the standard GST substrate 1-chloro-2,4-dinitrobenzene (CDNB). May be involved in cell wall organization and biogenesis. The protein is Glutathione S-transferase omega-like 2 of Saccharomyces cerevisiae (strain ATCC 204508 / S288c) (Baker's yeast).